A 157-amino-acid chain; its full sequence is SsrA-binding protein (157 aa).

Belongs to the SmpB family.

Its subcellular location is the cytoplasm. In terms of biological role, required for rescue of stalled ribosomes mediated by trans-translation. Binds to transfer-messenger RNA (tmRNA), required for stable association of tmRNA with ribosomes. tmRNA and SmpB together mimic tRNA shape, replacing the anticodon stem-loop with SmpB. tmRNA is encoded by the ssrA gene; the 2 termini fold to resemble tRNA(Ala) and it encodes a 'tag peptide', a short internal open reading frame. During trans-translation Ala-aminoacylated tmRNA acts like a tRNA, entering the A-site of stalled ribosomes, displacing the stalled mRNA. The ribosome then switches to translate the ORF on the tmRNA; the nascent peptide is terminated with the 'tag peptide' encoded by the tmRNA and targeted for degradation. The ribosome is freed to recommence translation, which seems to be the essential function of trans-translation. The chain is SsrA-binding protein from Elusimicrobium minutum (strain Pei191).